Consider the following 122-residue polypeptide: Large ribosomal subunit protein uL14 (122 aa).

It belongs to the universal ribosomal protein uL14 family. Part of the 50S ribosomal subunit. Forms a cluster with proteins L3 and L19. In the 70S ribosome, L14 and L19 interact and together make contacts with the 16S rRNA in bridges B5 and B8.

Functionally, binds to 23S rRNA. Forms part of two intersubunit bridges in the 70S ribosome. This Bifidobacterium adolescentis (strain ATCC 15703 / DSM 20083 / NCTC 11814 / E194a) protein is Large ribosomal subunit protein uL14.